The following is a 138-amino-acid chain: Membrane glycoprotein UL139 (138 aa).

The first 15 residues, 1 to 15 (MLWILVLFALAASAS), serve as a signal peptide directing secretion. The segment at 17–37 (TTTGTSSNSSQSTSAGTTNTT) is disordered. A helical transmembrane segment spans residues 64–84 (GWTLSGLLLIFTCCLCCFWLV). The segment covering 113–129 (SDATLPMGTTGSYTPPQ) has biased composition (polar residues). A disordered region spans residues 113-138 (SDATLPMGTTGSYTPPQDGSFPPPPR).

The protein localises to the host membrane. The chain is Membrane glycoprotein UL139 (UL139) from Homo sapiens (Human).